The chain runs to 257 residues: MDRIIEKLESGWWIVSHEQKLWLPYGELPHGLAANFDLVGQRALRIGEWQGEPVWLVLQHRRHDMGSVRQVIDQEAGLFQLAGRGVQLAEFYRSHKFCGYCGHPMHPSKTEWAMLCSHCRERYYPQIAPCIIVAIRREDSILLAQHVRHRNGVHTVLAGFVEVGETLEQAVAREVMEESGIKVKNLRYVTSQPWPFPQSLMTAFMAEYDSGEIVIDPKELLEANWYRYDDLPLLPPPGTVARRLIEDTVAMCRAEYD.

Substrate is bound at residue Arg69. Residues Cys98 and Cys101 each coordinate Zn(2+). Residue Glu111 coordinates substrate. Residues Cys116 and Cys119 each contribute to the Zn(2+) site. Tyr124 contacts substrate. Residues 125–248 form the Nudix hydrolase domain; the sequence is PQIAPCIIVA…TVARRLIEDT (124 aa). A divalent metal cation contacts are provided by Ala158, Glu174, and Glu178. Residues 159–180 carry the Nudix box motif; the sequence is GFVEVGETLEQAVAREVMEESG. 192–199 is a substrate binding site; it reads QPWPFPQS. Glu219 serves as a coordination point for a divalent metal cation. Ala241 contacts substrate.

Belongs to the Nudix hydrolase family. NudC subfamily. As to quaternary structure, homodimer. Requires Mg(2+) as cofactor. The cofactor is Mn(2+). Zn(2+) serves as cofactor.

The enzyme catalyses a 5'-end NAD(+)-phospho-ribonucleoside in mRNA + H2O = a 5'-end phospho-adenosine-phospho-ribonucleoside in mRNA + beta-nicotinamide D-ribonucleotide + 2 H(+). It catalyses the reaction NAD(+) + H2O = beta-nicotinamide D-ribonucleotide + AMP + 2 H(+). It carries out the reaction NADH + H2O = reduced beta-nicotinamide D-ribonucleotide + AMP + 2 H(+). In terms of biological role, mRNA decapping enzyme that specifically removes the nicotinamide adenine dinucleotide (NAD) cap from a subset of mRNAs by hydrolyzing the diphosphate linkage to produce nicotinamide mononucleotide (NMN) and 5' monophosphate mRNA. The NAD-cap is present at the 5'-end of some mRNAs and stabilizes RNA against 5'-processing. Has preference for mRNAs with a 5'-end purine. Catalyzes the hydrolysis of a broad range of dinucleotide pyrophosphates. In Salmonella typhimurium (strain LT2 / SGSC1412 / ATCC 700720), this protein is NAD-capped RNA hydrolase NudC.